The sequence spans 395 residues: Elongation factor Tu (395 aa).

One can recognise a tr-type G domain in the interval 10–204 (KPHVNIGTIG…EVDAYIPTPE (195 aa)). Positions 19–26 (GHVDHGKT) are G1. Residue 19 to 26 (GHVDHGKT) participates in GTP binding. A Mg(2+)-binding site is contributed by threonine 26. The interval 60–64 (GITIS) is G2. Residues 81–84 (DCPG) are G3. GTP is bound by residues 81-85 (DCPGH) and 136-139 (NKCD). The tract at residues 136–139 (NKCD) is G4. A G5 region spans residues 174 to 176 (SAL).

The protein belongs to the TRAFAC class translation factor GTPase superfamily. Classic translation factor GTPase family. EF-Tu/EF-1A subfamily. Monomer.

The protein resides in the cytoplasm. It catalyses the reaction GTP + H2O = GDP + phosphate + H(+). GTP hydrolase that promotes the GTP-dependent binding of aminoacyl-tRNA to the A-site of ribosomes during protein biosynthesis. The chain is Elongation factor Tu from Bacillus anthracis (strain A0248).